The sequence spans 553 residues: Arginine--tRNA ligase (553 aa).

The 'HIGH' region motif lies at 130–140 (ANPTGPIHLGG).

The protein belongs to the class-I aminoacyl-tRNA synthetase family. As to quaternary structure, monomer.

Its subcellular location is the cytoplasm. It carries out the reaction tRNA(Arg) + L-arginine + ATP = L-arginyl-tRNA(Arg) + AMP + diphosphate. This Corynebacterium aurimucosum (strain ATCC 700975 / DSM 44827 / CIP 107346 / CN-1) (Corynebacterium nigricans) protein is Arginine--tRNA ligase.